The sequence spans 419 residues: uncharacterized protein (419 aa).

The next 13 membrane-spanning stretches (helical) occupy residues 5 to 25, 26 to 46, 53 to 73, 102 to 122, 144 to 164, 170 to 190, 210 to 230, 234 to 254, 274 to 294, 309 to 329, 332 to 352, 360 to 380, and 396 to 416; these read MIIVFCALMMLAVPVGYALII, AAGVAVLFNGYLPLSIVAQQI, FPMLALPFFMLAGTLMLGGEL, VFGGVSGSAVANASALGSVLI, VIDVLIPPSIPMILFSLVSGV, FVAGILPGILMAASFVFVCWF, ATLALKSLPAVLLPVLIILFL, LATPTEVAVLSVVYSLALSLL, ATGVVMLVIMGSAAVGWVLTF, ISSPIVIILMMNILMLIVGMP, MPPAILLLGPIFVPLADTIGL, MMVINLGIGLYTPPIGTTLFI, and LWPFFAMAMTLLLAVSFIPAL.

Belongs to the YiaN/YgiK family.

Its subcellular location is the cell inner membrane. This is an uncharacterized protein from Sinorhizobium fredii (strain NBRC 101917 / NGR234).